A 370-amino-acid polypeptide reads, in one-letter code: Protein-tyrosine sulfotransferase 1 (370 aa).

Residues 1–8 (MVGKLKQN) are Cytoplasmic-facing. The chain crosses the membrane as a helical; Signal-anchor for type II membrane protein span at residues 9–25 (LLLACLVISSVTVFYLG). Residues 26 to 370 (QHAMECHHRI…KEKPQTEQVE (345 aa)) are Lumenal-facing. The N-linked (GlcNAc...) asparagine glycan is linked to asparagine 60. 79 to 83 (RSGTT) serves as a coordination point for 3'-phosphoadenylyl sulfate. Cysteines 97 and 157 form a disulfide. Catalysis depends on glutamate 100, which acts as the Proton donor/acceptor. Positions 102–106 (RVIPR) are interaction with peptide substrate. 3 residues coordinate 3'-phosphoadenylyl sulfate: arginine 184, serine 192, and arginine 196. Cysteine 226 and cysteine 234 form a disulfide bridge. Tyrosine 239 provides a ligand contact to 3'-phosphoadenylyl sulfate. An N-linked (GlcNAc...) asparagine glycan is attached at asparagine 262. Residues 286-295 (STDQVIKPVN) and lysine 301 each bind 3'-phosphoadenylyl sulfate.

It belongs to the protein sulfotransferase family. In terms of assembly, homodimer. Can also form heterodimers with TPST2. In terms of processing, N-glycosylated. In terms of tissue distribution, ubiquitous. Detected in heart, brain, lung, liver, spleen, kidney, skeletal muscle and testis.

The protein resides in the golgi apparatus membrane. The catalysed reaction is L-tyrosyl-[protein] + 3'-phosphoadenylyl sulfate = O-sulfo-L-tyrosine-[protein] + adenosine 3',5'-bisphosphate + H(+). Its function is as follows. Catalyzes the O-sulfation of tyrosine residues within acidic motifs of polypeptides, using 3'-phosphoadenylyl sulfate (PAPS) as cosubstrate. The polypeptide is Protein-tyrosine sulfotransferase 1 (Tpst1) (Mus musculus (Mouse)).